The following is a 569-amino-acid chain: Endonuclease/exonuclease/phosphatase family domain-containing protein 1 (569 aa).

The N-myristoyl glycine moiety is linked to residue Gly2. Phosphoserine is present on residues Ser16 and Ser25. The region spanning 38–67 (ERLNINTATEEELMTLPGVTRAVARSIVEY) is the HhH domain. Ser106, Ser110, Ser160, and Ser173 each carry phosphoserine. Residues 200–224 (SRPPSTHTNGGLTFTAKPHPSPTSL) are disordered. Over residues 202 to 211 (PPSTHTNGGL) the composition is skewed to polar residues. Position 265 is a phosphothreonine (Thr265). The tract at residues 549–569 (VPRNGNGVTLEPSEANIKHER) is disordered.

The polypeptide is Endonuclease/exonuclease/phosphatase family domain-containing protein 1 (Eepd1) (Mus musculus (Mouse)).